We begin with the raw amino-acid sequence, 312 residues long: Malate dehydrogenase (312 aa).

NAD(+)-binding positions include 12 to 17 (GAGFTG) and aspartate 36. Residues arginine 87 and arginine 93 each contribute to the substrate site. Residues asparagine 100 and 123–125 (LTN) each bind NAD(+). Position 125 (asparagine 125) interacts with substrate. Residue serine 149 is modified to Phosphoserine. Residue arginine 156 coordinates substrate. Histidine 180 serves as the catalytic Proton acceptor.

The protein belongs to the LDH/MDH superfamily. MDH type 3 family.

It catalyses the reaction (S)-malate + NAD(+) = oxaloacetate + NADH + H(+). In terms of biological role, catalyzes the reversible oxidation of malate to oxaloacetate. This is Malate dehydrogenase from Bacillus pumilus (strain SAFR-032).